Reading from the N-terminus, the 208-residue chain is MKSNSQDAASIVWHPQLVTKQARNQSNGHKSRMIWFTGLSGSGKSTIANAVQAELFKRGIQVYVLDGDNLRHGLNADLSFSMEDRKENIRRTAEVGKLFVDAGLVVLAALISPVEEERQRARSRFAEDEFLEVYVSCTLQECEKRDPKGLYKKARKGEIPQFTGIHQPYEEPKNPDICIDTTDRTVEQSVQIILPIILEKIAWKEGEQ.

ATP is bound at residue 38–45; the sequence is GLSGSGKS. Catalysis depends on serine 112, which acts as the Phosphoserine intermediate.

Belongs to the APS kinase family.

It catalyses the reaction adenosine 5'-phosphosulfate + ATP = 3'-phosphoadenylyl sulfate + ADP + H(+). Its pathway is sulfur metabolism; hydrogen sulfide biosynthesis; sulfite from sulfate: step 2/3. Catalyzes the synthesis of activated sulfate. This chain is Probable adenylyl-sulfate kinase, found in Halalkalibacterium halodurans (strain ATCC BAA-125 / DSM 18197 / FERM 7344 / JCM 9153 / C-125) (Bacillus halodurans).